The chain runs to 116 residues: MGWKMASPTDGTDLEASLLSFEKLDRASPDLWPEQLPGVAEFAASFKSPITSSPPKWMAEIERDDIDMLKELGSLTTANLMEKVRGLQNLAYQLGLDESREMTRGKFLNILEKPKK.

Phosphoserine is present on residues S28 and S53.

The protein belongs to the lin-52 family. In terms of assembly, component of the DREAM complex (also named LINC complex) at least composed of E2F4, E2F5, LIN9, LIN37, LIN52, LIN54, MYBL1, MYBL2, RBL1, RBL2, RBBP4, TFDP1 and TFDP2. The complex exists in quiescent cells where it represses cell cycle-dependent genes. It dissociates in S phase when LIN9, LIN37, LIN52 and LIN54 form a subcomplex that binds to MYBL2.

In Homo sapiens (Human), this protein is Protein lin-52 homolog (LIN52).